The sequence spans 242 residues: Small ribosomal subunit protein uS2 (242 aa).

It belongs to the universal ribosomal protein uS2 family.

The protein is Small ribosomal subunit protein uS2 of Shewanella pealeana (strain ATCC 700345 / ANG-SQ1).